The following is a 168-amino-acid chain: Ribosome maturation factor RimM (168 aa).

A PRC barrel domain is found at 95–168 (EEGYYWSDLI…RITVDWGLDY (74 aa)).

This sequence belongs to the RimM family. Binds ribosomal protein uS19.

Its subcellular location is the cytoplasm. Its function is as follows. An accessory protein needed during the final step in the assembly of 30S ribosomal subunit, possibly for assembly of the head region. Essential for efficient processing of 16S rRNA. May be needed both before and after RbfA during the maturation of 16S rRNA. It has affinity for free ribosomal 30S subunits but not for 70S ribosomes. This Nitrosospira multiformis (strain ATCC 25196 / NCIMB 11849 / C 71) protein is Ribosome maturation factor RimM.